The primary structure comprises 80 residues: MPKRVLQGTVVSDKNDKTVVVRVERRFAHPLLKKTVRRSKRYKAHDENNMCKVGDVVLIQETRPISKDKCWVVVNENQAQ.

Belongs to the universal ribosomal protein uS17 family. In terms of assembly, part of the 30S ribosomal subunit.

One of the primary rRNA binding proteins, it binds specifically to the 5'-end of 16S ribosomal RNA. The protein is Small ribosomal subunit protein uS17 of Chelativorans sp. (strain BNC1).